Consider the following 141-residue polypeptide: Aspartate 1-decarboxylase (141 aa).

S25 functions as the Schiff-base intermediate with substrate; via pyruvic acid in the catalytic mechanism. S25 carries the post-translational modification Pyruvic acid (Ser). A substrate-binding site is contributed by T57. The active-site Proton donor is Y58. Position 73–75 (73–75 (GAA)) interacts with substrate.

The protein belongs to the PanD family. In terms of assembly, heterooctamer of four alpha and four beta subunits. Requires pyruvate as cofactor. In terms of processing, is synthesized initially as an inactive proenzyme, which is activated by self-cleavage at a specific serine bond to produce a beta-subunit with a hydroxyl group at its C-terminus and an alpha-subunit with a pyruvoyl group at its N-terminus.

The protein resides in the cytoplasm. It catalyses the reaction L-aspartate + H(+) = beta-alanine + CO2. Its pathway is cofactor biosynthesis; (R)-pantothenate biosynthesis; beta-alanine from L-aspartate: step 1/1. Its function is as follows. Catalyzes the pyruvoyl-dependent decarboxylation of aspartate to produce beta-alanine. The chain is Aspartate 1-decarboxylase from Pseudarthrobacter chlorophenolicus (strain ATCC 700700 / DSM 12829 / CIP 107037 / JCM 12360 / KCTC 9906 / NCIMB 13794 / A6) (Arthrobacter chlorophenolicus).